The sequence spans 211 residues: Redox-sensing transcriptional repressor Rex (211 aa).

The segment at residues 16–55 is a DNA-binding region (H-T-H motif); sequence LYYRYLLILNEEGKDKVSSTELSEAVQVDSASIRRDFSYF. Residue 90 to 95 coordinates NAD(+); it reads GVGNLG.

The protein belongs to the transcriptional regulatory Rex family. As to quaternary structure, homodimer.

The protein localises to the cytoplasm. Its function is as follows. Modulates transcription in response to changes in cellular NADH/NAD(+) redox state. In Lactobacillus acidophilus (strain ATCC 700396 / NCK56 / N2 / NCFM), this protein is Redox-sensing transcriptional repressor Rex.